A 321-amino-acid polypeptide reads, in one-letter code: NADPH-dependent D-xylose reductase (321 aa).

Residue Y50 is the Proton donor of the active site. H112 contacts substrate. NADP(+) contacts are provided by residues 167-168, 216-225, and 272-282; these read SN, SSFGPQSFVE, and KSNKKERLLGN.

It belongs to the aldo/keto reductase family.

It catalyses the reaction xylitol + NAD(+) = D-xylose + NADH + H(+). The catalysed reaction is xylitol + NADP(+) = D-xylose + NADPH + H(+). Its pathway is carbohydrate metabolism; D-xylose degradation. Functionally, reduces D-xylose into xylitol. Preferentially utilizes NADPH as a cosubstrate. In Candida boidinii (Yeast), this protein is NADPH-dependent D-xylose reductase (XYL1).